We begin with the raw amino-acid sequence, 244 residues long: UPF0280 protein Msp_1322 (244 aa).

The protein belongs to the UPF0280 family.

This Methanosphaera stadtmanae (strain ATCC 43021 / DSM 3091 / JCM 11832 / MCB-3) protein is UPF0280 protein Msp_1322.